The primary structure comprises 66 residues: Small ribosomal subunit protein bS21 (66 aa).

This sequence belongs to the bacterial ribosomal protein bS21 family.

This Rickettsia africae (strain ESF-5) protein is Small ribosomal subunit protein bS21.